Here is a 627-residue protein sequence, read N- to C-terminus: 1-deoxy-D-xylulose-5-phosphate synthase (627 aa).

Residues His80 and 121–123 (GHS) contribute to the thiamine diphosphate site. Asp152 contacts Mg(2+). Thiamine diphosphate-binding positions include 153–154 (GA), Asn181, Tyr288, and Glu370. Asn181 is a Mg(2+) binding site.

It belongs to the transketolase family. DXPS subfamily. As to quaternary structure, homodimer. The cofactor is Mg(2+). Requires thiamine diphosphate as cofactor.

The enzyme catalyses D-glyceraldehyde 3-phosphate + pyruvate + H(+) = 1-deoxy-D-xylulose 5-phosphate + CO2. It participates in metabolic intermediate biosynthesis; 1-deoxy-D-xylulose 5-phosphate biosynthesis; 1-deoxy-D-xylulose 5-phosphate from D-glyceraldehyde 3-phosphate and pyruvate: step 1/1. Catalyzes the acyloin condensation reaction between C atoms 2 and 3 of pyruvate and glyceraldehyde 3-phosphate to yield 1-deoxy-D-xylulose-5-phosphate (DXP). This chain is 1-deoxy-D-xylulose-5-phosphate synthase, found in Aliivibrio salmonicida (strain LFI1238) (Vibrio salmonicida (strain LFI1238)).